Here is a 420-residue protein sequence, read N- to C-terminus: Sulfate adenylyltransferase (420 aa).

Ala2 bears the N-acetylalanine mark.

This sequence belongs to the sulfate adenylyltransferase family. The cofactor is Mg(2+).

It carries out the reaction sulfate + ATP + H(+) = adenosine 5'-phosphosulfate + diphosphate. It functions in the pathway sulfur metabolism; hydrogen sulfide biosynthesis; sulfite from sulfate: step 1/3. Inhibited by adenosine 5'-phosphosulfate (APS), but not by 3'phosphoadenosine 5'-phosphosulfate (PAPS). Inhibited by AMP, ADP, CTP, GTP, ITP, UTP and anions other than those in group IV. This is Sulfate adenylyltransferase from Pyropia yezoensis (Susabi-nori).